The sequence spans 24 residues: Fraternine (24 aa).

Cysteine 11 and cysteine 24 form a disulfide bridge. At cysteine 24 the chain carries Cysteine amide.

In terms of tissue distribution, expressed by the venom gland.

It is found in the secreted. Functionally, wasp venom peptide that acts as a potent mast cell degranulating peptide without hemolytic activity. Shows neuroprotective effect, since it prevents the death of dopaminergic neurons of the brain substantia nigra region and recovers motor deficit in a 6-hydroxydopamine (6-OHDA)-induced murine model of Parkinson disease. The protein is Fraternine of Parachartergus fraternus (Artistic wasp).